A 1142-amino-acid polypeptide reads, in one-letter code: Ribonucleoside-diphosphate reductase large subunit (1142 aa).

The disordered stretch occupies residues 1–33 (MANRPAASALAGARSPSERQEPREPEVAPPGGD). Basic and acidic residues predominate over residues 16–26 (PSERQEPREPE). Positions 55–75 (AYRISDSSFVQCGSNCSMIID) match the RIP homotypic interaction motif (RHIM) motif. The disordered stretch occupies residues 118-322 (SGPSATTSVG…TDPGYPVPLE (205 aa)). A compositionally biased stretch (polar residues) spans 119–132 (GPSATTSVGTQTSG). Over residues 141 to 159 (TPEPQGPQAVPPPPPPPFP) the composition is skewed to pro residues. Residues 164–179 (CCARRDARGGAEKDVG) are compositionally biased toward basic and acidic residues. The span at 192 to 205 (SETEDSDSSDEDTG) shows a compositional bias: acidic residues. A compositionally biased stretch (low complexity) spans 277-303 (GSATDPRASADSDSAAHAAAPQADVAP). An alpha-crystallin domain region spans residues 294–400 (AAAPQADVAP…CLDLPPVPPN (107 aa)). Substrate is bound by residues threonine 571, 586–587 (SC), glycine 617, 796–800 (NLCTE), and 973–977 (PTAAS). Residues cysteine 587 and cysteine 813 are joined by a disulfide bond. Asparagine 796 acts as the Proton acceptor in catalysis. Residue cysteine 798 is the Cysteine radical intermediate of the active site. The active-site Proton acceptor is glutamate 800.

This sequence belongs to the ribonucleoside diphosphate reductase large chain family. Heterotetramer composed of a homodimer of the large subunit (R1) and a homodimer of the small subunit (R2). Larger multisubunit protein complex are also active, composed of (R1)n(R2)n. May self-assemble (via RIP homotypic interaction motif/RHIM) into homomeric fibrillar amyloid structures. Interacts (via RHIM) with human RIPK1 (via RHIM). Interacts (via RHIM) with human RIPK3 (via RHIM). May interact (via RHIM) with human ZBP1 (via RHIM). Interacts (via C-terminus) with host CASP8.

The protein localises to the host cell membrane. It is found in the host endosome membrane. It catalyses the reaction a 2'-deoxyribonucleoside 5'-diphosphate + [thioredoxin]-disulfide + H2O = a ribonucleoside 5'-diphosphate + [thioredoxin]-dithiol. Ribonucleoside-diphosphate reductase holoenzyme that provides the precursors necessary for viral DNA synthesis. Allows virus growth in non-dividing cells, as well as reactivation from latency in infected hosts. Catalyzes the biosynthesis of deoxyribonucleotides from the corresponding ribonucleotides. The N-terminal region confers antiapoptotic activity in differentiated cells such as neurons and is important for viral reactivation to increase neural survivability. Prevents host necroptosis by targeting host RIPK1 and RIPK3, thereby hampering the formation of necroptotic RIPK1-RIPK3 complexes. May form hetero-amyloid structures with host proteins RIPK3 or ZBP1, thereby preventing RIPK3- and ZBP1-mediated necroptosis. In addition, inhibits extrinsic apoptosis by targeting host CASP8. The protein is Ribonucleoside-diphosphate reductase large subunit of Homo sapiens (Human).